The sequence spans 116 residues: Aspartate 1-decarboxylase (116 aa).

Ser-25 functions as the Schiff-base intermediate with substrate; via pyruvic acid in the catalytic mechanism. Ser-25 carries the pyruvic acid (Ser) modification. A substrate-binding site is contributed by Thr-57. Tyr-58 acts as the Proton donor in catalysis. 72-74 (GAA) contributes to the substrate binding site.

This sequence belongs to the PanD family. In terms of assembly, heterooctamer of four alpha and four beta subunits. Pyruvate serves as cofactor. In terms of processing, is synthesized initially as an inactive proenzyme, which is activated by self-cleavage at a specific serine bond to produce a beta-subunit with a hydroxyl group at its C-terminus and an alpha-subunit with a pyruvoyl group at its N-terminus.

The protein resides in the cytoplasm. The catalysed reaction is L-aspartate + H(+) = beta-alanine + CO2. The protein operates within cofactor biosynthesis; (R)-pantothenate biosynthesis; beta-alanine from L-aspartate: step 1/1. In terms of biological role, catalyzes the pyruvoyl-dependent decarboxylation of aspartate to produce beta-alanine. In Helicobacter acinonychis (strain Sheeba), this protein is Aspartate 1-decarboxylase.